The chain runs to 425 residues: ATP-dependent RNA helicase eIF4A (425 aa).

The Q motif motif lies at 38 to 66 (DTWEDYGLKEDLLKGIYSIGFETPSFIQK). In terms of domain architecture, Helicase ATP-binding spans 69 to 241 (IQPIIDGRDI…EEILINPVII (173 aa)). ATP is bound at residue 82–89 (AQSGTGKT). The short motif at 187 to 190 (DEAD) is the DEAD box element. The 174-residue stretch at 252 to 425 (GIRQYFIDLR…KELPADFSFQ (174 aa)) folds into the Helicase C-terminal domain.

Belongs to the DEAD box helicase family. eIF4A subfamily. Component of the eIF4F complex, which composition varies with external and internal environmental conditions. It is composed of at least eIF4A, eIF4E and eIF4G.

The protein localises to the cytoplasm. The enzyme catalyses ATP + H2O = ADP + phosphate + H(+). Functionally, ATP-dependent RNA helicase which is a subunit of the eIF4F complex involved in cap recognition and is required for mRNA binding to ribosome. In the current model of translation initiation, eIF4A unwinds RNA secondary structures in the 5'-UTR of mRNAs which is necessary to allow efficient binding of the small ribosomal subunit, and subsequent scanning for the initiator codon. The polypeptide is ATP-dependent RNA helicase eIF4A (TIF1) (Encephalitozoon cuniculi (strain GB-M1) (Microsporidian parasite)).